Reading from the N-terminus, the 65-residue chain is Large ribosomal subunit protein uL29 (65 aa).

Belongs to the universal ribosomal protein uL29 family.

The chain is Large ribosomal subunit protein uL29 from Acinetobacter baumannii (strain AB307-0294).